The following is a 648-amino-acid chain: Phosphomethylpyrimidine synthase (648 aa).

Substrate is bound by residues N253, M282, Y311, H347, 367 to 369, 408 to 411, and E447; these read SRG and DGLR. H451 contributes to the Zn(2+) binding site. Position 474 (Y474) interacts with substrate. H515 provides a ligand contact to Zn(2+). [4Fe-4S] cluster is bound by residues C595, C598, and C603.

The protein belongs to the ThiC family. As to quaternary structure, homodimer. [4Fe-4S] cluster serves as cofactor.

The catalysed reaction is 5-amino-1-(5-phospho-beta-D-ribosyl)imidazole + S-adenosyl-L-methionine = 4-amino-2-methyl-5-(phosphooxymethyl)pyrimidine + CO + 5'-deoxyadenosine + formate + L-methionine + 3 H(+). The protein operates within cofactor biosynthesis; thiamine diphosphate biosynthesis. Catalyzes the synthesis of the hydroxymethylpyrimidine phosphate (HMP-P) moiety of thiamine from aminoimidazole ribotide (AIR) in a radical S-adenosyl-L-methionine (SAM)-dependent reaction. The sequence is that of Phosphomethylpyrimidine synthase from Burkholderia thailandensis (strain ATCC 700388 / DSM 13276 / CCUG 48851 / CIP 106301 / E264).